A 365-amino-acid polypeptide reads, in one-letter code: Peptide chain release factor 1 (365 aa).

Position 242 is an N5-methylglutamine (Q242).

It belongs to the prokaryotic/mitochondrial release factor family. Methylated by PrmC. Methylation increases the termination efficiency of RF1.

It is found in the cytoplasm. Peptide chain release factor 1 directs the termination of translation in response to the peptide chain termination codons UAG and UAA. In Fusobacterium nucleatum subsp. nucleatum (strain ATCC 25586 / DSM 15643 / BCRC 10681 / CIP 101130 / JCM 8532 / KCTC 2640 / LMG 13131 / VPI 4355), this protein is Peptide chain release factor 1.